We begin with the raw amino-acid sequence, 101 residues long: Small ribosomal subunit protein uS14 (101 aa).

Positions 1–23 (MAKKSSVEKNKRRRKMVAQQAPK) are disordered.

Belongs to the universal ribosomal protein uS14 family. In terms of assembly, part of the 30S ribosomal subunit. Contacts proteins S3 and S10.

Its function is as follows. Binds 16S rRNA, required for the assembly of 30S particles and may also be responsible for determining the conformation of the 16S rRNA at the A site. This is Small ribosomal subunit protein uS14 from Rhodospirillum centenum (strain ATCC 51521 / SW).